We begin with the raw amino-acid sequence, 634 residues long: MLTFFAAFLAAPLALAESPYLVRVDAARPLRPLLPFWRSTGFCPPLPHDQADQYDLSWDQQLNLAYIGAVPHSGIEQVRIHWLLDLITARKSPGQGLMYNFTHLDAFLDLLMENQLLPGFELMGSPSGYFTDFDDKQQVFEWKDLVSLLARRYIGRYGLTHVSKWNFETWNEPDHHDFDNVSMTTQGFLNYYDACSEGLRIASPTLKLGGPGDSFHPLPRSPMCWSLLGHCANGTNFFTGEVGVRLDYISLHKKGAGSSIAILEQEMAVVEQVQQLFPEFKDTPIYNDEADPLVGWSLPQPWRADVTYAALVVKVIAQHQNLLFANSSSSMRYVLLSNDNAFLSYHPYPFSQRTLTARFQVNNTHPPHVQLLRKPVLTVMGLMALLDGEQLWAEVSKAGAVLDSNHTVGVLASTHHPEGSAAAWSTTVLIYTSDDTHAHPNHSIPVTLRLRGVPPGLDLVYIVLYLDNQLSSPYSAWQHMGQPVFPSAEQFRRMRMVEDPVAEAPRPFPARGRLTLHRKLPVPSLLLVHVCTRPLKPPGQVSRLRALPLTHGQLILVWSDERVGSKCLWTYEIQFSQKGEEYAPINRRPSTFNLFVFSPDTAVVSGSYRVRALDYWARPGPFSDPVTYLDVPAS.

Positions 1-16 are cleaved as a signal peptide; the sequence is MLTFFAAFLAAPLALA. Positions 44, 46, and 48 each coordinate alpha-D-mannopyranose. His81 contacts alpha-L-iduronate. Asn100 carries N-linked (GlcNAc...) asparagine glycosylation. Alpha-L-iduronate is bound by residues Asn171 and Glu172. The active-site Proton donor is the Glu172. N-linked (GlcNAc...) asparagine glycans are attached at residues Asn180 and Asn233. The alpha-L-iduronate site is built by Lys254, Glu289, and Gly295. Glu289 acts as the Nucleophile in catalysis. Residue Trp296 coordinates alpha-D-mannopyranose. Residue Asn326 is glycosylated (N-linked (GlcNAc...) asparagine). Residues Asp339 and Arg353 each coordinate alpha-L-iduronate. 3 N-linked (GlcNAc...) asparagine glycosylation sites follow: Asn362, Asn405, and Asn441. Cys531 and Cys567 form a disulfide bridge.

This sequence belongs to the glycosyl hydrolase 39 family. In terms of assembly, monomer. In terms of processing, N-glycosylation contributes to substrate binding and is required for full enzymatic activity. In terms of tissue distribution, ubiquitous.

The protein resides in the lysosome. The enzyme catalyses Hydrolysis of unsulfated alpha-L-iduronosidic linkages in dermatan sulfate.. This Mus musculus (Mouse) protein is Alpha-L-iduronidase (Idua).